We begin with the raw amino-acid sequence, 357 residues long: Protein Wnt-8c (357 aa).

A signal peptide spans 1 to 16; that stretch reads MRGSTFLLLSIVGIYG. Cysteine 55 and cysteine 66 form a disulfide bridge. Asparagine 104 is a glycosylation site (N-linked (GlcNAc...) asparagine). Intrachain disulfides connect cysteine 105–cysteine 113, cysteine 115–cysteine 133, cysteine 181–cysteine 195, cysteine 183–cysteine 190, cysteine 260–cysteine 298, cysteine 276–cysteine 291, cysteine 313–cysteine 328, cysteine 315–cysteine 325, and cysteine 320–cysteine 321. The O-palmitoleoyl serine moiety is linked to residue serine 187. N-linked (GlcNAc...) asparagine glycosylation is found at asparagine 263 and asparagine 282. N-linked (GlcNAc...) asparagine glycosylation is present at asparagine 346.

The protein belongs to the Wnt family. Post-translationally, palmitoleoylation is required for efficient binding to frizzled receptors. Depalmitoleoylation leads to Wnt signaling pathway inhibition. In terms of processing, proteolytic processing by tiki1 and tiki2 promotes oxidation and formation of large disulfide-bond oligomers, leading to inactivation of wnt8c. In terms of tissue distribution, cells that form rhombomere 4. Hensen node and the neural plate immediately anterior to it.

It localises to the secreted. Its subcellular location is the extracellular space. The protein localises to the extracellular matrix. Its function is as follows. Ligand for members of the frizzled family of seven transmembrane receptors. Probable developmental protein. Is likely to signal over only few cell diameters. May be involved in the regulation of axis formation and in the rhombomere specification. The protein is Protein Wnt-8c (WNT8C) of Gallus gallus (Chicken).